The following is a 365-amino-acid chain: tRNA-specific 2-thiouridylase MnmA (365 aa).

ATP is bound by residues 9–16 and Met35; that span reads AMSGGVDS. Cys105 acts as the Nucleophile in catalysis. The cysteines at positions 105 and 203 are disulfide-linked. ATP is bound at residue Gly129. Residues 153-155 are interaction with tRNA; it reads KDQ. The active-site Cysteine persulfide intermediate is Cys203. The interval 308–309 is interaction with tRNA; the sequence is RY.

Belongs to the MnmA/TRMU family.

Its subcellular location is the cytoplasm. The enzyme catalyses S-sulfanyl-L-cysteinyl-[protein] + uridine(34) in tRNA + AH2 + ATP = 2-thiouridine(34) in tRNA + L-cysteinyl-[protein] + A + AMP + diphosphate + H(+). In terms of biological role, catalyzes the 2-thiolation of uridine at the wobble position (U34) of tRNA, leading to the formation of s(2)U34. In Pelotomaculum thermopropionicum (strain DSM 13744 / JCM 10971 / SI), this protein is tRNA-specific 2-thiouridylase MnmA.